The chain runs to 412 residues: Alanyl-tRNA editing protein Aarsd1 (412 aa).

Zn(2+) is bound by residues histidine 109 and histidine 113. Serine 174 is subject to Phosphoserine. Residues cysteine 209 and histidine 213 each contribute to the Zn(2+) site.

Belongs to the class-II aminoacyl-tRNA synthetase family. Alax-L subfamily. Requires Zn(2+) as cofactor.

The protein localises to the cytoplasm. Functions in trans to edit the amino acid moiety from incorrectly charged tRNA(Ala). This is Alanyl-tRNA editing protein Aarsd1 (Aarsd1) from Rattus norvegicus (Rat).